The primary structure comprises 253 residues: Sporulation initiation inhibitor protein Soj (253 aa).

Positions 11, 12, 13, 14, 15, 16, 17, 18, 214, and 216 each coordinate ATP. Mg(2+) is bound at residue Thr-17.

The protein belongs to the ParA family. In terms of assembly, dimerizes in the presence of ATP but not ADP; ATP-binding is required for double-stranded (ds)DNA-binding. Interacts with DnaA.

It localises to the cytoplasm. The catalysed reaction is ATP + H2O = ADP + phosphate + H(+). Its function is as follows. Acts as a spatially regulated molecular switch, capable of either inhibiting or activating the ability of DnaA to initiate DNA replication. Monomeric ADP-Soj inhibits oligomerization of DnaA on single-stranded (ss)- or double-stranded (ds)DNA, thus inhibiting DNA replication initiation; does not disassemble premade DnaA-DNA filaments. Decreases the residence time of DnaA on the chromosome at its binding sites (oriC, replication forks and (probably) promoter-binding sites). Soj forms nucleoprotein filaments in an ATP- and DNA-dependent manner. Inhibits the initiation of sporulation, Spo0J antagonizes this inhibition. Soj ultimately inhibits the activation (phosphorylation) of Spo0A. This chain is Sporulation initiation inhibitor protein Soj, found in Bacillus subtilis (strain 168).